The chain runs to 467 residues: Dihydrolipoyl dehydrogenase 3 (467 aa).

FAD contacts are provided by residues 34-43 (EGRETLGGTC), lysine 52, and alanine 116. An intrachain disulfide couples cysteine 43 to cysteine 48. NAD(+) contacts are provided by residues 182 to 186 (GAGVI), glutamate 205, valine 239, and 272 to 275 (AIGR). FAD-binding residues include aspartate 314 and alanine 322. The active-site Proton acceptor is the histidine 446.

It belongs to the class-I pyridine nucleotide-disulfide oxidoreductase family. In terms of assembly, homodimer. It depends on FAD as a cofactor.

Its subcellular location is the cytoplasm. It carries out the reaction N(6)-[(R)-dihydrolipoyl]-L-lysyl-[protein] + NAD(+) = N(6)-[(R)-lipoyl]-L-lysyl-[protein] + NADH + H(+). Its function is as follows. LPD-3 may substitute for lipoamide dehydrogenase of the 2-oxoglutarate dehydrogenase and pyruvate multienzyme complexes when the latter is inactive or missing. The chain is Dihydrolipoyl dehydrogenase 3 (lpd3) from Pseudomonas aeruginosa (strain ATCC 15692 / DSM 22644 / CIP 104116 / JCM 14847 / LMG 12228 / 1C / PRS 101 / PAO1).